The sequence spans 497 residues: NAD(P)H-quinone oxidoreductase chain 4, chloroplastic (497 aa).

A run of 14 helical transmembrane segments spans residues 5–25 (VPWLTVIVSLPIFAGLMIPIL), 36–56 (YTLGICILEFLLITYIFYCHF), 88–108 (LGLVILTGFATTLATLSAWPI), 112–132 (TRLFYFLMLIMYGGQIGLFVS), 135–155 (ILLFFFMWEIELIPVYLLLCL), 168–188 (FVLYTAGGSIFLLVAALTMSF), 212–232 (VLIYVGFLVAYAVKLPIFPFH), 243–263 (HYSTCMLLAGVLLKMGGYGLI), 275–295 (FLLGSWMMLFGAIQIIYASLI), 306–326 (IAYSSISHMGFVTIGIGSFTE), 331–351 (GAILQMISHGLIGAALFFLAG), 387–407 (LALPGMSGFVSELLVFLGVVT), 418–438 (GITVLEGIGTVLTPIYLLSML), and 463–483 (LFILICFLLPILGIGLYPNLI).

The protein belongs to the complex I subunit 4 family.

The protein resides in the plastid. It localises to the chloroplast thylakoid membrane. It carries out the reaction a plastoquinone + NADH + (n+1) H(+)(in) = a plastoquinol + NAD(+) + n H(+)(out). It catalyses the reaction a plastoquinone + NADPH + (n+1) H(+)(in) = a plastoquinol + NADP(+) + n H(+)(out). The polypeptide is NAD(P)H-quinone oxidoreductase chain 4, chloroplastic (Adiantum capillus-veneris (Maidenhair fern)).